The primary structure comprises 174 residues: Peptide deformylase (174 aa).

Residues C94 and H136 each contribute to the Fe cation site. The active site involves E137. H140 lines the Fe cation pocket.

Belongs to the polypeptide deformylase family. Fe(2+) serves as cofactor.

It carries out the reaction N-terminal N-formyl-L-methionyl-[peptide] + H2O = N-terminal L-methionyl-[peptide] + formate. Functionally, removes the formyl group from the N-terminal Met of newly synthesized proteins. Requires at least a dipeptide for an efficient rate of reaction. N-terminal L-methionine is a prerequisite for activity but the enzyme has broad specificity at other positions. The sequence is that of Peptide deformylase from Maricaulis maris (strain MCS10) (Caulobacter maris).